The sequence spans 269 residues: D-aminoacyl-tRNA deacylase (269 aa).

Belongs to the DtdA deacylase family. Monomer. Zn(2+) is required as a cofactor.

The enzyme catalyses a D-aminoacyl-tRNA + H2O = a tRNA + a D-alpha-amino acid + H(+). It carries out the reaction glycyl-tRNA(Ala) + H2O = tRNA(Ala) + glycine + H(+). Functionally, D-aminoacyl-tRNA deacylase with broad substrate specificity. By recycling D-aminoacyl-tRNA to D-amino acids and free tRNA molecules, this enzyme counteracts the toxicity associated with the formation of D-aminoacyl-tRNA entities in vivo. This is D-aminoacyl-tRNA deacylase from Caldivirga maquilingensis (strain ATCC 700844 / DSM 13496 / JCM 10307 / IC-167).